The sequence spans 803 residues: MITLTELKCLADAQSSYHILKPWWDVFWYYITLIMLLVAVLAGALQLTQSRVLCCLPCKVEFDNHCAVPWDILKASMNTSSNPGTPLPLPLRIQNDLHRQQYSYIDAVCYEKQLHWFAKFFPYLVLLHTLIFAACSNFWLHYPSTSSRLEHFVAILHKCFDSPWTTRALSETVAEQSVRPLKLSKSKILLSSSGCSADIDSGKQSLPYPQPGLESAGIESPTSSVLDKKEGEQAKAIFEKVKRFRMHVEQKDIIYRVYLKQIIVKVILFVLIITYVPYFLTHITLEIDCSVDVQAFTGYKRYQCVYSLAEIFKVLASFYVILVILYGLTSSYSLWWMLRSSLKQYSFEALREKSNYSDIPDVKNDFAFILHLADQYDPLYSKRFSIFLSEVSENKLKQINLNNEWTVEKLKSKLVKNAQDKIELHLFMLNGLPDNVFELTEMEVLSLELIPEVKLPSAVSQLVNLKELRVYHSSLVVDHPALAFLEENLKILRLKFTEMGKIPRWVFHLKNLKELYLSGCVLPEQLSTMQLEGFQDLKNLRTLYLKSSLSRIPQVVTDLLPSLQKLSLDNEGSKLVVLNNLKKMVNLKSLELISCDLERIPHSIFSLNNLHELDLRENNLKTVEEIISFQHLQNLSCLKLWHNNIAYIPAQIGALSNLEQLSLDHNNIENLPLQLFLCTKLHYLDLSYNHLTFIPEEIQYLSNLQYFAVTNNNIEMLPDGLFQCKKLQCLLLGKNSLMNLSPHVGELSNLTHLELIGNYLETLPPELEGCQSLKRNCLIVEENLLNTLPLPVTERLQTCLDKC.

Residues 1-25 (MITLTELKCLADAQSSYHILKPWWD) are Cytoplasmic-facing. Residues 26-46 (VFWYYITLIMLLVAVLAGALQ) form a helical membrane-spanning segment. Topologically, residues 47–119 (LTQSRVLCCL…YEKQLHWFAK (73 aa)) are extracellular. Intrachain disulfides connect C55–C304 and C109–C289. N78 is a glycosylation site (N-linked (GlcNAc...) asparagine). The helical transmembrane segment at 120 to 140 (FFPYLVLLHTLIFAACSNFWL) threads the bilayer. Residues 141 to 261 (HYPSTSSRLE…DIIYRVYLKQ (121 aa)) lie on the Cytoplasmic side of the membrane. Phosphoserine is present on residues S186 and S196. The helical transmembrane segment at 262 to 282 (IIVKVILFVLIITYVPYFLTH) threads the bilayer. At 283-307 (ITLEIDCSVDVQAFTGYKRYQCVYS) the chain is on the extracellular side. The helical transmembrane segment at 308–328 (LAEIFKVLASFYVILVILYGL) threads the bilayer. Over 329-803 (TSSYSLWWML…ERLQTCLDKC (475 aa)) the chain is Cytoplasmic. LRR repeat units follow at residues 464-486 (NLKE…AFLE), 488-509 (NLKI…VFHL), 511-532 (NLKE…MQLE), 539-559 (NLRT…VTDL), 562-582 (SLQK…NNLK), 586-607 (NLKS…IFSL), 609-630 (NLHE…ISFQ), 634-655 (NLSC…IGAL), 657-678 (NLEQ…LFLC), 680-701 (KLHY…IQYL), 703-724 (NLQY…LFQC), 726-747 (KLQC…VGEL), and 749-771 (NLTH…EGCQ).

This sequence belongs to the LRRC8 family. As to quaternary structure, heterohexamer; oligomerizes with other LRRC8 proteins (LRRC8A, LRRC8C, LRRC8D and/or LRRC8E) to form a heterohexamer. In vivo, the subunit composition may depend primarily on expression levels, and heterooligomeric channels containing various proportions of the different LRRC8 proteins may coexist.

The protein resides in the cell membrane. It localises to the endoplasmic reticulum membrane. It catalyses the reaction chloride(in) = chloride(out). The catalysed reaction is iodide(out) = iodide(in). The enzyme catalyses taurine(out) = taurine(in). Functionally, non-essential component of the volume-regulated anion channel (VRAC, also named VSOAC channel), an anion channel required to maintain a constant cell volume in response to extracellular or intracellular osmotic changes. The VRAC channel conducts iodide better than chloride and can also conduct organic osmolytes like taurine. Channel activity requires LRRC8A plus at least one other family member (LRRC8B, LRRC8C, LRRC8D or LRRC8E); channel characteristics depend on the precise subunit composition. This chain is Volume-regulated anion channel subunit LRRC8B, found in Homo sapiens (Human).